We begin with the raw amino-acid sequence, 343 residues long: Heat-inducible transcription repressor HrcA (343 aa).

It belongs to the HrcA family.

Functionally, negative regulator of class I heat shock genes (grpE-dnaK-dnaJ and groELS operons). Prevents heat-shock induction of these operons. The sequence is that of Heat-inducible transcription repressor HrcA from Lysinibacillus sphaericus (Bacillus sphaericus).